The chain runs to 295 residues: Nuclear transcription factor Y subunit A-2 (295 aa).

A Subunit association domain (SAD) motif is present at residues Tyr-139–Lys-165. Positions Lys-173–Thr-198 form a DNA-binding region, NFYA/HAP2-type. The segment covering His-178–Arg-189 has biased composition (basic residues). The interval His-178–Asn-244 is disordered. Over residues Asn-197–Asn-209 the composition is skewed to polar residues. A compositionally biased stretch (low complexity) spans Ser-216–Ser-233.

The protein belongs to the NFYA/HAP2 subunit family. Heterotrimeric transcription factor composed of three components, NF-YA, NF-YB and NF-YC. NF-YB and NF-YC must interact and dimerize for NF-YA association and DNA binding. Component of a heat stress-inducible transcriptional complex with NF-YA and NF-YB subunits made, at least, of NFYA2, NFYB3 and DPB3-1 in cooperation with DREB2A. In terms of tissue distribution, ubiquitous. Expressed in seedlings, roots, petioles, hypocotyls, reproductive organ tissues and leaves.

Its subcellular location is the nucleus. In terms of biological role, stimulates the transcription of various genes by recognizing and binding to a CCAAT motif in promoters. Promotes the expression of heat stress-inducible genes by contributing to the formation of a heat stress-specific transcriptional complex with NF-Y subunits (e.g. DPB3-1, NF-YA2 and NF-YB3) and DREB2A at the promoter of target genes, thus promoting heat tolerance. The sequence is that of Nuclear transcription factor Y subunit A-2 from Arabidopsis thaliana (Mouse-ear cress).